The chain runs to 551 residues: Frizzled-2 (551 aa).

A signal peptide spans 1–26 (MQGVTRASILLIIYHLFTLSLGQLHG). Topologically, residues 27-231 (EKGISVPEHG…FSQDEIRFAR (205 aa)) are extracellular. The 120-residue stretch at 33 to 152 (PEHGFCQPIS…HGAEQICVGQ (120 aa)) folds into the FZ domain. Cystine bridges form between Cys-38–Cys-99, Cys-46–Cys-92, Cys-83–Cys-120, Cys-109–Cys-149, and Cys-113–Cys-137. A glycan (N-linked (GlcNAc...) asparagine) is linked at Asn-52. A glycan (N-linked (GlcNAc...) asparagine) is linked at Asn-153. The chain crosses the membrane as a helical span at residues 232 to 252 (IWILIWSVLCCASTFITVTTY). Residues 253–265 (LVDMQRFRYPERP) are Cytoplasmic-facing. A helical membrane pass occupies residues 266 to 286 (IIFLSGCYTMVSVAYIAGFVL). The Extracellular portion of the chain corresponds to 287 to 313 (GDKVVCNEGFSEDGYKTVVQGTKKEGC). Residues 314-334 (TILFMMLYFFSMASSIWWVIL) form a helical membrane-spanning segment. The Cytoplasmic portion of the chain corresponds to 335 to 356 (SLTWFLAAGMKWGHEAIEANSQ). A helical transmembrane segment spans residues 357 to 377 (YFHLAAWAVPAVKTITILAMG). At 378 to 400 (QIDGDLLSGVCFVGLNNIDPLRG) the chain is on the extracellular side. The chain crosses the membrane as a helical span at residues 401–421 (FVLAPLFVYLFIGTSFLLAGF). Topologically, residues 422 to 447 (VSLFRIRTIMKHDGTKTEKLERLMVR) are cytoplasmic. The helical transmembrane segment at 448–468 (IGVFSVLYTVPATIVIACYFY) threads the bilayer. The Extracellular portion of the chain corresponds to 469-505 (EQAFREHWERSWVSQNCKSLAIPCPLQYTPRMTPDFT). A helical transmembrane segment spans residues 506–526 (VYMIKYLMTLIVGITSGFWIW). The Cytoplasmic segment spans residues 527–534 (SGKTLHSW). The Lys-Thr-X-X-X-Trp motif, mediates interaction with the PDZ domain of Dvl family members signature appears at 529–534 (KTLHSW). The PDZ-binding signature appears at 549 to 551 (TTV).

This sequence belongs to the G-protein coupled receptor Fz/Smo family. As to expression, widely expressed, especially in the eye anlage, otic vesicle and developing somites.

The protein resides in the membrane. The protein localises to the cell membrane. Receptor for Wnt proteins. Most of frizzled receptors are coupled to the beta-catenin canonical signaling pathway, which leads to the activation of disheveled proteins, inhibition of GSK-3 kinase, nuclear accumulation of beta-catenin and activation of Wnt target genes. A second signaling pathway involving PKC and calcium fluxes has been seen for some family members, but it is not yet clear if it represents a distinct pathway or if it can be integrated in the canonical pathway, as PKC seems to be required for Wnt-mediated inactivation of GSK-3 kinase. Both pathways seem to involve interactions with G-proteins. May be involved in transduction and intercellular transmission of polarity information during tissue morphogenesis and/or in differentiated tissues. This is Frizzled-2 (fzd2) from Xenopus laevis (African clawed frog).